The following is a 422-amino-acid chain: uncharacterized protein (422 aa).

The region spanning 5 to 83 (CVVYVGNIPY…RRLRVDFPTA (79 aa)) is the RRM domain. The interval 337-358 (RSSSIPSSGSIRSPSLTTTSAQ) is disordered.

Its subcellular location is the nucleus. This is an uncharacterized protein from Schizosaccharomyces pombe (strain 972 / ATCC 24843) (Fission yeast).